The primary structure comprises 339 residues: Phenylalanine--tRNA ligase alpha subunit (339 aa).

Glu254 is a binding site for Mg(2+).

Belongs to the class-II aminoacyl-tRNA synthetase family. Phe-tRNA synthetase alpha subunit type 1 subfamily. As to quaternary structure, tetramer of two alpha and two beta subunits. Requires Mg(2+) as cofactor.

It is found in the cytoplasm. It catalyses the reaction tRNA(Phe) + L-phenylalanine + ATP = L-phenylalanyl-tRNA(Phe) + AMP + diphosphate + H(+). The sequence is that of Phenylalanine--tRNA ligase alpha subunit from Clostridium novyi (strain NT).